The primary structure comprises 728 residues: 1,4-alpha-glucan branching enzyme GlgB (728 aa).

The Nucleophile role is filled by aspartate 405. Glutamate 458 (proton donor) is an active-site residue.

Belongs to the glycosyl hydrolase 13 family. GlgB subfamily. Monomer.

The enzyme catalyses Transfers a segment of a (1-&gt;4)-alpha-D-glucan chain to a primary hydroxy group in a similar glucan chain.. It participates in glycan biosynthesis; glycogen biosynthesis. Catalyzes the formation of the alpha-1,6-glucosidic linkages in glycogen by scission of a 1,4-alpha-linked oligosaccharide from growing alpha-1,4-glucan chains and the subsequent attachment of the oligosaccharide to the alpha-1,6 position. This is 1,4-alpha-glucan branching enzyme GlgB from Escherichia coli O139:H28 (strain E24377A / ETEC).